The chain runs to 630 residues: UvrABC system protein C (630 aa).

One can recognise a GIY-YIG domain in the interval 18-97 (TQSGVYLMKN…IKKHRPKYNI (80 aa)). A UVR domain is found at 207–242 (KKVIKSMTEKMMGAADEEKFEVAARLRDSIEAIKAI).

The protein belongs to the UvrC family. In terms of assembly, interacts with UvrB in an incision complex.

It is found in the cytoplasm. In terms of biological role, the UvrABC repair system catalyzes the recognition and processing of DNA lesions. UvrC both incises the 5' and 3' sides of the lesion. The N-terminal half is responsible for the 3' incision and the C-terminal half is responsible for the 5' incision. This chain is UvrABC system protein C, found in Bdellovibrio bacteriovorus (strain ATCC 15356 / DSM 50701 / NCIMB 9529 / HD100).